A 726-amino-acid polypeptide reads, in one-letter code: Probable dipeptidyl-peptidase 5 (726 aa).

The signal sequence occupies residues 1–19 (MAAAKWLIASLAFASSGLA). 2 N-linked (GlcNAc...) asparagine glycosylation sites follow: N96 and N252. Positions 269–291 (AEPINKRNGPRTPQGIEGASSSP) are disordered. S558 functions as the Charge relay system in the catalytic mechanism. N-linked (GlcNAc...) asparagine glycosylation is present at N605. Catalysis depends on charge relay system residues D641 and H673. The N-linked (GlcNAc...) asparagine glycan is linked to N699.

Belongs to the peptidase S9C family.

The protein resides in the secreted. In terms of biological role, extracellular dipeptidyl-peptidase which removes N-terminal dipeptides sequentially from polypeptides having unsubstituted N-termini. Contributes to pathogenicity. This chain is Probable dipeptidyl-peptidase 5 (DPP5), found in Trichophyton verrucosum (strain HKI 0517).